The primary structure comprises 230 residues: Large ribosomal subunit protein uL1 (230 aa).

It belongs to the universal ribosomal protein uL1 family. As to quaternary structure, part of the 50S ribosomal subunit.

In terms of biological role, binds directly to 23S rRNA. The L1 stalk is quite mobile in the ribosome, and is involved in E site tRNA release. Functionally, protein L1 is also a translational repressor protein, it controls the translation of the L11 operon by binding to its mRNA. This Aster yellows witches'-broom phytoplasma (strain AYWB) protein is Large ribosomal subunit protein uL1.